Here is an 86-residue protein sequence, read N- to C-terminus: Large ribosomal subunit protein eL43 (86 aa).

Zn(2+)-binding residues include cysteine 38, cysteine 41, cysteine 56, and cysteine 59. The C4-type zinc-finger motif lies at 38–59 (CPVCGRKAVRRISTGIWQCQKC).

Belongs to the eukaryotic ribosomal protein eL43 family. In terms of assembly, part of the 50S ribosomal subunit. Requires Zn(2+) as cofactor.

The sequence is that of Large ribosomal subunit protein eL43 from Thermococcus kodakarensis (strain ATCC BAA-918 / JCM 12380 / KOD1) (Pyrococcus kodakaraensis (strain KOD1)).